The chain runs to 258 residues: Proteasome subunit alpha type-3 (258 aa).

Glycyl lysine isopeptide (Lys-Gly) (interchain with G-Cter in ubiquitin) cross-links involve residues K100, K199, and K231.

Belongs to the peptidase T1A family. The 26S proteasome consists of a 20S proteasome core and two 19S regulatory subunits. The 20S proteasome core is composed of 28 subunits that are arranged in four stacked rings, resulting in a barrel-shaped structure. The two end rings are each formed by seven alpha subunits, and the two central rings are each formed by seven beta subunits. The catalytic chamber with the active sites is on the inside of the barrel.

It is found in the cytoplasm. The protein resides in the nucleus. Its function is as follows. The proteasome degrades poly-ubiquitinated proteins in the cytoplasm and in the nucleus. It is essential for the regulated turnover of proteins and for the removal of misfolded proteins. The proteasome is a multicatalytic proteinase complex that is characterized by its ability to cleave peptides with Arg, Phe, Tyr, Leu, and Glu adjacent to the leaving group at neutral or slightly basic pH. It has an ATP-dependent proteolytic activity. This chain is Proteasome subunit alpha type-3 (PRE9), found in Saccharomyces cerevisiae (strain ATCC 204508 / S288c) (Baker's yeast).